Consider the following 454-residue polypeptide: Tubulin beta-2 chain (454 aa).

Residues Q11, E69, S138, G142, T143, G144, N204, and N226 each contribute to the GTP site. E69 is a binding site for Mg(2+). The segment at 426-454 (QEASVDDEAMEDDAEAEGGAGQNEAVEEF) is disordered. Residues 429–441 (SVDDEAMEDDAEA) are compositionally biased toward acidic residues.

Belongs to the tubulin family. Dimer of alpha and beta chains. A typical microtubule is a hollow water-filled tube with an outer diameter of 25 nm and an inner diameter of 15 nM. Alpha-beta heterodimers associate head-to-tail to form protofilaments running lengthwise along the microtubule wall with the beta-tubulin subunit facing the microtubule plus end conferring a structural polarity. Microtubules usually have 13 protofilaments but different protofilament numbers can be found in some organisms and specialized cells. Mg(2+) is required as a cofactor.

Its subcellular location is the cytoplasm. The protein localises to the cytoskeleton. It localises to the spindle. The protein resides in the nucleus. Its function is as follows. Tubulin is the major constituent of microtubules, a cylinder consisting of laterally associated linear protofilaments composed of alpha- and beta-tubulin heterodimers. Microtubules grow by the addition of GTP-tubulin dimers to the microtubule end, where a stabilizing cap forms. Below the cap, tubulin dimers are in GDP-bound state, owing to GTPase activity of alpha-tubulin. This is the major beta tubulin of mitotic spindle. The sequence is that of Tubulin beta-2 chain (BETC) from Physarum polycephalum (Slime mold).